Consider the following 201-residue polypeptide: Histone chaperone asf1a-A (201 aa).

The protein belongs to the ASF1 family. In terms of assembly, interacts with histone H3 (including both histone H3.1 and H3.3) and histone H4. Interacts with hira and p60.

The protein resides in the nucleus. Histone chaperone that facilitates histone deposition and histone exchange and removal during nucleosome assembly and disassembly. Not critical for histone deposition during nucleosome assembly. This Xenopus laevis (African clawed frog) protein is Histone chaperone asf1a-A (asf1aa).